The following is a 459-amino-acid chain: Exodeoxyribonuclease 7 large subunit (459 aa).

Belongs to the XseA family. In terms of assembly, heterooligomer composed of large and small subunits.

Its subcellular location is the cytoplasm. It catalyses the reaction Exonucleolytic cleavage in either 5'- to 3'- or 3'- to 5'-direction to yield nucleoside 5'-phosphates.. Its function is as follows. Bidirectionally degrades single-stranded DNA into large acid-insoluble oligonucleotides, which are then degraded further into small acid-soluble oligonucleotides. The sequence is that of Exodeoxyribonuclease 7 large subunit from Yersinia pseudotuberculosis serotype IB (strain PB1/+).